The chain runs to 661 residues: MAFDVSCFFWVVLFSAGCKVITSWDQMCIEKEANKTYNCENLGLSEIPDTLPNTTEFLEFSFNFLPTIHNRTFSRLMNLTFLDLTRCQINWIHEDTFQSHHQLSTLVLTGNPLIFMAETSLNGPKSLKHLFLIQTGISNLEFIPVHNLENLESLYLGSNHISSIKFPKDFPARNLKVLDFQNNAIHYISREDMRSLEQAINLSLNFNGNNVKGIELGAFDSTIFQSLNFGGTPNLSVIFNGLQNSTTQSLWLGTFEDIDDEDISSAMLKGLCEMSVESLNLQEHRFSDISSTTFQCFTQLQELDLTATHLKGLPSGMKGLNLLKKLVLSVNHFDQLCQISAANFPSLTHLYIRGNVKKLHLGVGCLEKLGNLQTLDLSHNDIEASDCCSLQLKNLSHLQTLNLSHNEPLGLQSQAFKECPQLELLDLAFTRLHINAPQSPFQNLHFLQVLNLTYCFLDTSNQHLLAGLPVLRHLNLKGNHFQDGTITKTNLLQTVGSLEVLILSSCGLLSIDQQAFHSLGKMSHVDLSHNSLTCDSIDSLSHLKGIYLNLAANSINIISPRLLPILSQQSTINLSHNPLDCTCSNIHFLTWYKENLHKLEGSEETTCANPPSLRGVKLSDVKLSCGITAIGIFFLIVFLLLLAILLFFAVKYLLRWKYQHI.

The signal sequence occupies residues 1–23 (MAFDVSCFFWVVLFSAGCKVITS). At 24 to 626 (WDQMCIEKEA…KLSDVKLSCG (603 aa)) the chain is on the extracellular side. The 21-residue stretch at 33–53 (ANKTYNCENLGLSEIPDTLPN) folds into the LRRNT domain. Asparagine 34, asparagine 53, asparagine 70, and asparagine 78 each carry an N-linked (GlcNAc...) asparagine glycan. LRR repeat units follow at residues 54 to 75 (TTEFLEFSFNFLPTIHNRTFSR), 78 to 99 (NLTFLDLTRCQINWIHEDTFQS), 102 to 123 (QLSTLVLTGNPLIFMAETSLNG), 126 to 147 (SLKHLFLIQTGISNLEFIPVHN), 150 to 171 (NLESLYLGSNHISSIKFPKDFP), 174 to 195 (NLKVLDFQNNAIHYISREDMRS), and 201 to 221 (NLSLNFNGNNVKGIELGAFDS). Asparagine 201, asparagine 234, and asparagine 244 each carry an N-linked (GlcNAc...) asparagine glycan. LRR repeat units lie at residues 275–296 (SVESLNLQEHRFSDISSTTFQC), 299–320 (QLQELDLTATHLKGLPSGMKGL), 322–343 (LLKKLVLSVNHFDQLCQISAAN), 346–366 (SLTHLYIRGNVKKLHLGVGCL), and 371–391 (NLQTLDLSHNDIEASDCCSLQ). Asparagine 394 and asparagine 402 each carry an N-linked (GlcNAc...) asparagine glycan. LRR repeat units follow at residues 397–418 (HLQTLNLSHNEPLGLQSQAFKE), 421–442 (QLELLDLAFTRLHINAPQSPFQ), 446–466 (FLQVLNLTYCFLDTSNQHLLA), 470–493 (VLRHLNLKGNHFQDGTITKTNLLQ), 497–518 (SLEVLILSSCGLLSIDQQAFHS), 521–544 (KMSHVDLSHNSLTCDSIDSLSHLK), and 546–564 (IYLNLAANSINIISPRLLP). Residue asparagine 451 is glycosylated (N-linked (GlcNAc...) asparagine). Residue asparagine 573 is glycosylated (N-linked (GlcNAc...) asparagine). One can recognise an LRRCT domain in the interval 577-627 (NPLDCTCSNIHFLTWYKENLHKLEGSEETTCANPPSLRGVKLSDVKLSCGI). A helical transmembrane segment spans residues 627–650 (ITAIGIFFLIVFLLLLAILLFFAV). Over 651-661 (KYLLRWKYQHI) the chain is Cytoplasmic.

It belongs to the Toll-like receptor family. In terms of assembly, M-shaped tetramer of two CD180-LY86 heterodimers. In terms of tissue distribution, expressed mainly on mature peripherical B cells. Detected in spleen, lymph node and appendix. Not detected in pre-B and -T cells.

It localises to the cell membrane. Its function is as follows. May cooperate with MD-1 and TLR4 to mediate the innate immune response to bacterial lipopolysaccharide (LPS) in B-cells. Leads to NF-kappa-B activation. Also involved in the life/death decision of B-cells. In Homo sapiens (Human), this protein is CD180 antigen (CD180).